We begin with the raw amino-acid sequence, 715 residues long: Fatty acid oxidation complex subunit alpha (715 aa).

The enoyl-CoA hydratase/isomerase stretch occupies residues 1–190; that stretch reads MIYEGKAITV…KVGAVDAVVA (190 aa). Position 297 (D297) interacts with substrate. Residues 312-715 are 3-hydroxyacyl-CoA dehydrogenase; that stretch reads HDVKQAAVLG…MAKNGQRFFN (404 aa). Residues M325, D344, 401–403, K408, and S430 contribute to the NAD(+) site; that span reads VVE. The active-site For 3-hydroxyacyl-CoA dehydrogenase activity is H451. N454 contributes to the NAD(+) binding site. N501 and Y660 together coordinate substrate.

In the N-terminal section; belongs to the enoyl-CoA hydratase/isomerase family. This sequence in the C-terminal section; belongs to the 3-hydroxyacyl-CoA dehydrogenase family. Heterotetramer of two alpha chains (FadB) and two beta chains (FadA).

It catalyses the reaction a (3S)-3-hydroxyacyl-CoA + NAD(+) = a 3-oxoacyl-CoA + NADH + H(+). The enzyme catalyses a (3S)-3-hydroxyacyl-CoA = a (2E)-enoyl-CoA + H2O. The catalysed reaction is a 4-saturated-(3S)-3-hydroxyacyl-CoA = a (3E)-enoyl-CoA + H2O. It carries out the reaction (3S)-3-hydroxybutanoyl-CoA = (3R)-3-hydroxybutanoyl-CoA. It catalyses the reaction a (3Z)-enoyl-CoA = a 4-saturated (2E)-enoyl-CoA. The enzyme catalyses a (3E)-enoyl-CoA = a 4-saturated (2E)-enoyl-CoA. Its pathway is lipid metabolism; fatty acid beta-oxidation. Involved in the aerobic and anaerobic degradation of long-chain fatty acids via beta-oxidation cycle. Catalyzes the formation of 3-oxoacyl-CoA from enoyl-CoA via L-3-hydroxyacyl-CoA. It can also use D-3-hydroxyacyl-CoA and cis-3-enoyl-CoA as substrate. This chain is Fatty acid oxidation complex subunit alpha, found in Pseudomonas putida (strain ATCC 700007 / DSM 6899 / JCM 31910 / BCRC 17059 / LMG 24140 / F1).